Here is a 484-residue protein sequence, read N- to C-terminus: Sperm-associated antigen 8 (484 aa).

Over residues 1-11 (METSESTDRSQ) the composition is skewed to basic and acidic residues. Disordered regions lie at residues 1-32 (METS…DPFS), 123-221 (DLSS…SAPV), and 324-348 (LQPQ…SHCQ). 2 stretches are compositionally biased toward low complexity: residues 20-32 (SSDG…DPFS) and 125-160 (SSSR…SSSS). The segment covering 161 to 195 (GPGGSPGGSGRGPGHGPGPGGGSGQGPGGGSGQGT) has biased composition (gly residues). The segment covering 324–339 (LQPQSPTSSCTTQKDS) has biased composition (polar residues). Mn regions lie at residues 332–345 (SCTT…PPKS) and 384–398 (ESVT…LVQA). The disordered stretch occupies residues 455–484 (PLPFEPESYSQHGEISSLACQGGGQGGGGG). Residues 475–484 (QGGGQGGGGG) show a composition bias toward gly residues.

This sequence belongs to the SPAG8 family. Microtubule inner protein component of sperm flagellar doublet microtubules. Interacts with FHL5 (via second LIM domain). Interacts with RANBP9. Expressed in trachea multiciliated cells.

The protein resides in the cytoplasm. The protein localises to the nucleus. It localises to the cytoplasmic vesicle. Its subcellular location is the secretory vesicle. It is found in the acrosome. The protein resides in the cytoskeleton. The protein localises to the microtubule organizing center. It localises to the spindle. Its subcellular location is the cilium axoneme. It is found in the flagellum axoneme. Its function is as follows. Microtubule inner protein (MIP) part of the dynein-decorated doublet microtubules (DMTs) in cilia axoneme, which is required for motile cilia beating. Plays a role in spermatogenesis by enhancing the binding of CREM isoform tau to its coactivator FHL5 and increasing the FHL5-regulated transcriptional activation of CREM isoform tau. Involved in the acrosome reaction and in binding of sperm to the zona pellucida. Plays a role in regulation of the cell cycle by controlling progression through the G2/M phase, possibly by delaying the activation of CDK1 which is required for entry into mitosis. May play a role in fertility and microtubule formation through interaction with RANBP9. This Bos taurus (Bovine) protein is Sperm-associated antigen 8 (SPAG8).